The primary structure comprises 33 residues: Neutrophil defensin 1 (33 aa).

3 disulfide bridges follow: Cys-3–Cys-31, Cys-5–Cys-20, and Cys-10–Cys-30.

The protein belongs to the alpha-defensin family.

Its subcellular location is the secreted. Functionally, anti-fungal and bactericidal activity, greater against Gram-positive bacteria. In Mesocricetus auratus (Golden hamster), this protein is Neutrophil defensin 1.